Reading from the N-terminus, the 545-residue chain is Sulfite oxidase, mitochondrial (545 aa).

The N-terminal 79 residues, 1-79 (MLLLHRAVVL…YQDHRCRAAQ (79 aa)), are a transit peptide targeting the mitochondrion. The region spanning 82-161 (THIYTKEEVS…LAQYKIGELN (80 aa)) is the Cytochrome b5 heme-binding domain. His118 is a binding site for heme b. The residue at position 123 (Ser123) is a Phosphoserine. Positions 143, 145, and 147 each coordinate heme b. A hinge region spans residues 165–174 (KVAPTVETSD). The tract at residues 175-401 (PYADDPVRHP…YSHWQRRDYK (227 aa)) is moco domain. Mo-molybdopterin is bound by residues 215–219 (FTRNH), Cys264, Asp322, His361, Arg366, and 377–379 (HVK). The interval 402 to 538 (GFSPSVDWET…RGVLSNAWHR (137 aa)) is homodimerization.

In terms of assembly, homodimer. The cofactor is heme b. Mo-molybdopterin is required as a cofactor.

It is found in the mitochondrion intermembrane space. The catalysed reaction is sulfite + O2 + H2O = sulfate + H2O2. Its pathway is energy metabolism; sulfur metabolism. Catalyzes the oxidation of sulfite to sulfate, the terminal reaction in the oxidative degradation of sulfur-containing amino acids. This Homo sapiens (Human) protein is Sulfite oxidase, mitochondrial (SUOX).